The primary structure comprises 295 residues: Cytidine deaminase (295 aa).

CMP/dCMP-type deaminase domains follow at residues 48–168 (SDKE…FGPA) and 187–295 (DDKD…FVNV). 89 to 91 (NME) lines the substrate pocket. Position 102 (His102) interacts with Zn(2+). Glu104 serves as the catalytic Proton donor. Zn(2+)-binding residues include Cys129 and Cys132.

This sequence belongs to the cytidine and deoxycytidylate deaminase family. Homodimer. Requires Zn(2+) as cofactor.

The enzyme catalyses cytidine + H2O + H(+) = uridine + NH4(+). It catalyses the reaction 2'-deoxycytidine + H2O + H(+) = 2'-deoxyuridine + NH4(+). Functionally, this enzyme scavenges exogenous and endogenous cytidine and 2'-deoxycytidine for UMP synthesis. The sequence is that of Cytidine deaminase from Vibrio parahaemolyticus serotype O3:K6 (strain RIMD 2210633).